Here is a 464-residue protein sequence, read N- to C-terminus: Glycine--tRNA ligase (464 aa).

Substrate is bound by residues R104 and E175. ATP is bound by residues 207–209, 217–222, 292–293, and 336–339; these read RNE, FRTREF, EL, and GVNR. Residue 222-226 participates in substrate binding; it reads FEQME. 332 to 336 lines the substrate pocket; sequence EPALG.

This sequence belongs to the class-II aminoacyl-tRNA synthetase family. Homodimer.

The protein resides in the cytoplasm. It catalyses the reaction tRNA(Gly) + glycine + ATP = glycyl-tRNA(Gly) + AMP + diphosphate. Its function is as follows. Catalyzes the attachment of glycine to tRNA(Gly). This Leptospira interrogans serogroup Icterohaemorrhagiae serovar Lai (strain 56601) protein is Glycine--tRNA ligase.